The following is a 157-amino-acid chain: D-aminoacyl-tRNA deacylase (157 aa).

The short motif at 137–138 (GP) is the Gly-cisPro motif, important for rejection of L-amino acids element.

The protein belongs to the DTD family. As to quaternary structure, homodimer.

The protein localises to the cytoplasm. It carries out the reaction glycyl-tRNA(Ala) + H2O = tRNA(Ala) + glycine + H(+). The enzyme catalyses a D-aminoacyl-tRNA + H2O = a tRNA + a D-alpha-amino acid + H(+). Its function is as follows. An aminoacyl-tRNA editing enzyme that deacylates mischarged D-aminoacyl-tRNAs. Also deacylates mischarged glycyl-tRNA(Ala), protecting cells against glycine mischarging by AlaRS. Acts via tRNA-based rather than protein-based catalysis; rejects L-amino acids rather than detecting D-amino acids in the active site. By recycling D-aminoacyl-tRNA to D-amino acids and free tRNA molecules, this enzyme counteracts the toxicity associated with the formation of D-aminoacyl-tRNA entities in vivo and helps enforce protein L-homochirality. The protein is D-aminoacyl-tRNA deacylase of Roseiflexus castenholzii (strain DSM 13941 / HLO8).